We begin with the raw amino-acid sequence, 269 residues long: Membrane protein insertase YidC 1 (269 aa).

The N-terminal stretch at Met1–Ala20 is a signal peptide. A lipid anchor (N-palmitoyl cysteine) is attached at Cys21. Cys21 carries S-diacylglycerol cysteine lipidation. 4 helical membrane passes run Ile45–Ile65, Tyr124–Leu144, Pro165–Met185, and Pro203–Ile223.

Belongs to the OXA1/ALB3/YidC family. Type 2 subfamily.

Its subcellular location is the cell membrane. Its function is as follows. Required for the insertion and/or proper folding and/or complex formation of integral membrane proteins into the membrane. Involved in integration of membrane proteins that insert both dependently and independently of the Sec translocase complex, as well as at least some lipoproteins. The sequence is that of Membrane protein insertase YidC 1 from Lactococcus lactis subsp. lactis (strain IL1403) (Streptococcus lactis).